The following is a 226-amino-acid chain: Thiamine-phosphate synthase (226 aa).

4-amino-2-methyl-5-(diphosphooxymethyl)pyrimidine-binding positions include 46–50 (QLRDK) and N87. Mg(2+) is bound by residues D88 and D107. Residue S126 participates in 4-amino-2-methyl-5-(diphosphooxymethyl)pyrimidine binding. 152-154 (TPT) lines the 2-[(2R,5Z)-2-carboxy-4-methylthiazol-5(2H)-ylidene]ethyl phosphate pocket. K155 provides a ligand contact to 4-amino-2-methyl-5-(diphosphooxymethyl)pyrimidine. G183 is a 2-[(2R,5Z)-2-carboxy-4-methylthiazol-5(2H)-ylidene]ethyl phosphate binding site.

It belongs to the thiamine-phosphate synthase family. Mg(2+) serves as cofactor.

It carries out the reaction 2-[(2R,5Z)-2-carboxy-4-methylthiazol-5(2H)-ylidene]ethyl phosphate + 4-amino-2-methyl-5-(diphosphooxymethyl)pyrimidine + 2 H(+) = thiamine phosphate + CO2 + diphosphate. The catalysed reaction is 2-(2-carboxy-4-methylthiazol-5-yl)ethyl phosphate + 4-amino-2-methyl-5-(diphosphooxymethyl)pyrimidine + 2 H(+) = thiamine phosphate + CO2 + diphosphate. The enzyme catalyses 4-methyl-5-(2-phosphooxyethyl)-thiazole + 4-amino-2-methyl-5-(diphosphooxymethyl)pyrimidine + H(+) = thiamine phosphate + diphosphate. The protein operates within cofactor biosynthesis; thiamine diphosphate biosynthesis; thiamine phosphate from 4-amino-2-methyl-5-diphosphomethylpyrimidine and 4-methyl-5-(2-phosphoethyl)-thiazole: step 1/1. In terms of biological role, condenses 4-methyl-5-(beta-hydroxyethyl)thiazole monophosphate (THZ-P) and 2-methyl-4-amino-5-hydroxymethyl pyrimidine pyrophosphate (HMP-PP) to form thiamine monophosphate (TMP). This chain is Thiamine-phosphate synthase, found in Mycobacterium sp. (strain KMS).